Consider the following 315-residue polypeptide: MVSSVLSIPPQTCLLPRLPISDSVNCKSKIVYCLSTSVRGSSVKRQSTARTRSFTETNRRTPSVQSKHEFWEDPDDGSDSENEYEGEEEDGIGNDLDNESDWEDDSRVQKLTTTDNYEEELAKEVEQLLEPEERVILQQNEKPNLKMISTKSWKPLQTLALSMQIQLMDNLIENGLDIDDVDKDNQTALHKAIIGKKEAVISHLLRKGANPHLQDRDGAAPIHYAVQVGALQTVKLLFKYNVDVNVADNEGWTPLHIAVQSRNRDITKILLTNGADKTRRTKDGKLALDLALCFGRDFKSYDLVKLLKIMPTGDI.

The transit peptide at 1–39 (MVSSVLSIPPQTCLLPRLPISDSVNCKSKIVYCLSTSVR) directs the protein to the chloroplast. The segment covering 44-65 (KRQSTARTRSFTETNRRTPSVQ) has biased composition (polar residues). Positions 44 to 106 (KRQSTARTRS…DNESDWEDDS (63 aa)) are disordered. Over residues 72–104 (EDPDDGSDSENEYEGEEEDGIGNDLDNESDWED) the composition is skewed to acidic residues. ANK repeat units lie at residues 151–180 (KSWKPLQTLALSMQIQLMDNLIENGLDIDD), 184–213 (DNQTALHKAIIGKKEAVISHLLRKGANPHL), 217–246 (DGAAPIHYAVQVGALQTVKLLFKYNVDVNV), 250–279 (EGWTPLHIAVQSRNRDITKILLTNGADKTR), and 283–307 (DGKLALDLALCFGRDFKSYDLVKLL).

As to quaternary structure, interacts with AKR. No homodimerization observed. Expressed in roots, inflorescence stems, flowers, siliques, dry seeds and mature cauline leaves.

The protein localises to the plastid. The protein resides in the chloroplast. Functionally, involved in the initial differentiation of the proplastid during the embryo development. Also required for correct cotyledon, true leaf and cauline leaf margin development. In Arabidopsis thaliana (Mouse-ear cress), this protein is Ankyrin repeat domain-containing protein EMB506, chloroplastic (EMB506).